Reading from the N-terminus, the 463-residue chain is O-phospho-L-seryl-tRNA:Cys-tRNA synthase 2 (463 aa).

Pyridoxal 5'-phosphate is bound by residues 154–155, asparagine 259, and 282–284; these read AR and SGH. N6-(pyridoxal phosphate)lysine is present on lysine 285.

It belongs to the SepCysS family. In terms of assembly, homodimer. Interacts with SepRS. It depends on pyridoxal 5'-phosphate as a cofactor.

It carries out the reaction O-phospho-L-seryl-tRNA(Cys) + hydrogen sulfide + H(+) = L-cysteinyl-tRNA(Cys) + phosphate. Functionally, converts O-phospho-L-seryl-tRNA(Cys) (Sep-tRNA(Cys)) to L-cysteinyl-tRNA(Cys) (Cys-tRNA(Cys)). The sequence is that of O-phospho-L-seryl-tRNA:Cys-tRNA synthase 2 from Methanocella arvoryzae (strain DSM 22066 / NBRC 105507 / MRE50).